A 401-amino-acid chain; its full sequence is (1R,4R,5S)-(-)-guaia-6,10(14)-diene synthase (401 aa).

Mg(2+) contacts are provided by D134 and E139. Positions 134-138 (DDQFD) match the DDXXD motif motif. Position 242 (R242) interacts with substrate. Residues N288 and S292 each contribute to the Mg(2+) site. K295 is a binding site for substrate. D296 serves as a coordination point for Mg(2+). 375–376 (RY) is a binding site for substrate.

It belongs to the terpene synthase family. Requires Mg(2+) as cofactor.

It carries out the reaction (2E,6E)-farnesyl diphosphate = (1R,4R,5S)-(-)-guaia-6,10(14)-diene + diphosphate. Its pathway is secondary metabolite biosynthesis; terpenoid biosynthesis. Its function is as follows. Catalyzes the conversion of (2E,6E)-farnesyl diphosphate (FPP) to yield the bicyclic sesquiterpene guaia-6,10(14)-diene via a 1,10-cyclization, which requires the abstraction of the pyrophosphate from FPP to yield the (E,E)-germacradienyl cation. The only accepted substrate is farnesyl diphosphate (FPP). The sequence is that of (1R,4R,5S)-(-)-guaia-6,10(14)-diene synthase from Fusarium mangiferae (Mango malformation disease fungus).